The following is a 393-amino-acid chain: Succinate--CoA ligase [ADP-forming] subunit beta (393 aa).

Residues 9–251 form the ATP-grasp domain; it reads KALFEKFGVL…LNEEDPKEIE (243 aa). ATP contacts are provided by residues Lys-46, 53 to 55, Ser-109, and Glu-114; that span reads GRG. Positions 206 and 220 each coordinate Mg(2+). Substrate is bound by residues Asn-271 and 328-330; that span reads GIM.

It belongs to the succinate/malate CoA ligase beta subunit family. Heterotetramer of two alpha and two beta subunits. Mg(2+) is required as a cofactor.

The catalysed reaction is succinate + ATP + CoA = succinyl-CoA + ADP + phosphate. The enzyme catalyses GTP + succinate + CoA = succinyl-CoA + GDP + phosphate. It participates in carbohydrate metabolism; tricarboxylic acid cycle; succinate from succinyl-CoA (ligase route): step 1/1. Functionally, succinyl-CoA synthetase functions in the citric acid cycle (TCA), coupling the hydrolysis of succinyl-CoA to the synthesis of either ATP or GTP and thus represents the only step of substrate-level phosphorylation in the TCA. The beta subunit provides nucleotide specificity of the enzyme and binds the substrate succinate, while the binding sites for coenzyme A and phosphate are found in the alpha subunit. This Opitutus terrae (strain DSM 11246 / JCM 15787 / PB90-1) protein is Succinate--CoA ligase [ADP-forming] subunit beta.